Here is a 217-residue protein sequence, read N- to C-terminus: 3,4-dihydroxy-2-butanone 4-phosphate synthase (217 aa).

D-ribulose 5-phosphate is bound by residues 37–38 (RE), D42, 150–154 (RGGHT), and E174. E38 serves as a coordination point for Mg(2+). Mg(2+) is bound at residue H153.

This sequence belongs to the DHBP synthase family. Homodimer. It depends on Mg(2+) as a cofactor. The cofactor is Mn(2+).

It catalyses the reaction D-ribulose 5-phosphate = (2S)-2-hydroxy-3-oxobutyl phosphate + formate + H(+). It participates in cofactor biosynthesis; riboflavin biosynthesis; 2-hydroxy-3-oxobutyl phosphate from D-ribulose 5-phosphate: step 1/1. Catalyzes the conversion of D-ribulose 5-phosphate to formate and 3,4-dihydroxy-2-butanone 4-phosphate. The sequence is that of 3,4-dihydroxy-2-butanone 4-phosphate synthase from Salmonella heidelberg (strain SL476).